The primary structure comprises 301 residues: MDERLGELVTERRSPDSAELDRMGTGELVRLMAREEARVPEAVARQAPRMAAAIDAVVERLRAGGRLIYVGAGTAGRVGVLDAVECGPTFGVPPGRVVGVIAGGREAMFDPRESAEDSAEAGASDLDRLCVGPEDAVVGVSASGRTPYTLGAVRRARERGALTVGLSCNPGSRLSDIVDHPLEVVVGPEVLAGSTRLKAGSAQKLVLNMISTISMVRLGKTYGNLMVDVRASNAKLRDRARRIVELATGAPPEEAAAALDRCGGEAKVAIVALLLGVGPDEARRRLAAGSVRAALGEGRRP.

In terms of domain architecture, SIS spans 57–220 (VVERLRAGGR…STISMVRLGK (164 aa)). Residue Glu-85 is the Proton donor of the active site. Glu-116 is a catalytic residue.

This sequence belongs to the GCKR-like family. MurNAc-6-P etherase subfamily. In terms of assembly, homodimer.

The enzyme catalyses N-acetyl-D-muramate 6-phosphate + H2O = N-acetyl-D-glucosamine 6-phosphate + (R)-lactate. It functions in the pathway amino-sugar metabolism; N-acetylmuramate degradation. Functionally, specifically catalyzes the cleavage of the D-lactyl ether substituent of MurNAc 6-phosphate, producing GlcNAc 6-phosphate and D-lactate. The sequence is that of N-acetylmuramic acid 6-phosphate etherase from Rubrobacter xylanophilus (strain DSM 9941 / JCM 11954 / NBRC 16129 / PRD-1).